The chain runs to 317 residues: 4-hydroxy-3-methylbut-2-enyl diphosphate reductase (317 aa).

Cys12 lines the [4Fe-4S] cluster pocket. His41 and His74 together coordinate (2E)-4-hydroxy-3-methylbut-2-enyl diphosphate. The dimethylallyl diphosphate site is built by His41 and His74. Residues His41 and His74 each contribute to the isopentenyl diphosphate site. Cys96 serves as a coordination point for [4Fe-4S] cluster. His124 contacts (2E)-4-hydroxy-3-methylbut-2-enyl diphosphate. His124 is a dimethylallyl diphosphate binding site. Position 124 (His124) interacts with isopentenyl diphosphate. Glu126 functions as the Proton donor in the catalytic mechanism. Thr168 lines the (2E)-4-hydroxy-3-methylbut-2-enyl diphosphate pocket. A [4Fe-4S] cluster-binding site is contributed by Cys198. Positions 226, 227, 228, and 270 each coordinate (2E)-4-hydroxy-3-methylbut-2-enyl diphosphate. Ser226, Ser227, Asn228, and Ser270 together coordinate dimethylallyl diphosphate. Ser226, Ser227, Asn228, and Ser270 together coordinate isopentenyl diphosphate.

It belongs to the IspH family. [4Fe-4S] cluster is required as a cofactor.

The catalysed reaction is isopentenyl diphosphate + 2 oxidized [2Fe-2S]-[ferredoxin] + H2O = (2E)-4-hydroxy-3-methylbut-2-enyl diphosphate + 2 reduced [2Fe-2S]-[ferredoxin] + 2 H(+). It carries out the reaction dimethylallyl diphosphate + 2 oxidized [2Fe-2S]-[ferredoxin] + H2O = (2E)-4-hydroxy-3-methylbut-2-enyl diphosphate + 2 reduced [2Fe-2S]-[ferredoxin] + 2 H(+). It functions in the pathway isoprenoid biosynthesis; dimethylallyl diphosphate biosynthesis; dimethylallyl diphosphate from (2E)-4-hydroxy-3-methylbutenyl diphosphate: step 1/1. The protein operates within isoprenoid biosynthesis; isopentenyl diphosphate biosynthesis via DXP pathway; isopentenyl diphosphate from 1-deoxy-D-xylulose 5-phosphate: step 6/6. In terms of biological role, catalyzes the conversion of 1-hydroxy-2-methyl-2-(E)-butenyl 4-diphosphate (HMBPP) into a mixture of isopentenyl diphosphate (IPP) and dimethylallyl diphosphate (DMAPP). Acts in the terminal step of the DOXP/MEP pathway for isoprenoid precursor biosynthesis. This is 4-hydroxy-3-methylbut-2-enyl diphosphate reductase from Chromohalobacter salexigens (strain ATCC BAA-138 / DSM 3043 / CIP 106854 / NCIMB 13768 / 1H11).